Here is a 427-residue protein sequence, read N- to C-terminus: Glutamate-1-semialdehyde 2,1-aminomutase (427 aa).

An N6-(pyridoxal phosphate)lysine modification is found at lysine 265.

The protein belongs to the class-III pyridoxal-phosphate-dependent aminotransferase family. HemL subfamily. As to quaternary structure, homodimer. Requires pyridoxal 5'-phosphate as cofactor.

It is found in the cytoplasm. The enzyme catalyses (S)-4-amino-5-oxopentanoate = 5-aminolevulinate. It functions in the pathway porphyrin-containing compound metabolism; protoporphyrin-IX biosynthesis; 5-aminolevulinate from L-glutamyl-tRNA(Glu): step 2/2. In Teredinibacter turnerae (strain ATCC 39867 / T7901), this protein is Glutamate-1-semialdehyde 2,1-aminomutase.